The chain runs to 426 residues: Riboflavin biosynthesis protein PYRD, chloroplastic (426 aa).

Residues 1–61 (MQISCLPISI…SQTGFSNPVL (61 aa)) constitute a chloroplast transit peptide. Residues 72-194 (VDDSFYMRKC…RLKDAGIDVT (123 aa)) form the CMP/dCMP-type deaminase domain. Residue H121 participates in Zn(2+) binding. E123 (proton donor) is an active-site residue. Residues C146 and C155 each contribute to the Zn(2+) site.

Zn(2+) is required as a cofactor.

It is found in the plastid. The protein localises to the chloroplast. It catalyses the reaction 2,5-diamino-6-hydroxy-4-(5-phosphoribosylamino)-pyrimidine + H2O + H(+) = 5-amino-6-(5-phospho-D-ribosylamino)uracil + NH4(+). It participates in cofactor biosynthesis; riboflavin biosynthesis; 5-amino-6-(D-ribitylamino)uracil from GTP: step 2/4. Its function is as follows. Monofunctional pyrimidine deaminase involved in the riboflavin biosynthesis pathway. Also has a reductase domain that lacks catalytically essential substrate-binding residues. The protein is Riboflavin biosynthesis protein PYRD, chloroplastic (PYRD) of Arabidopsis thaliana (Mouse-ear cress).